A 232-amino-acid chain; its full sequence is Ethylene-responsive transcription factor ERF025 (232 aa).

Over residues 1–29 the composition is skewed to polar residues; the sequence is MSNNNNSPTTVNQETTTSREVSITLPTDQ. The tract at residues 1–63 is disordered; the sequence is MSNNNNSPTT…TATGLSGKHS (63 aa). Positions 30–50 are enriched in low complexity; the sequence is SPQTSPGSSSSPSPRPSGGSP. The AP2/ERF DNA-binding region spans 64-120; that stretch reads IFRGIRLRNGKWVSEIREPRKTTRIWLGTYPVPEMAAAAYDVAALALKGPDAVLNFP. Positions 213-232 are disordered; it reads PTMEDDSPENHEGDNLWSYK.

Belongs to the AP2/ERF transcription factor family. ERF subfamily.

Its subcellular location is the nucleus. Functionally, probably acts as a transcriptional activator. Binds to the GCC-box pathogenesis-related promoter element. May be involved in the regulation of gene expression by stress factors and by components of stress signal transduction pathways. The protein is Ethylene-responsive transcription factor ERF025 (ERF025) of Arabidopsis thaliana (Mouse-ear cress).